The chain runs to 195 residues: PBAN-type neuropeptides (195 aa).

A signal peptide spans 1–33 (MIGFAVFSSFNRFTTIFVCVLLCVVYLLSYASG). A propeptide spanning residues 34 to 63 (EYDGRDSSSGSNNDRAPSNEFGSCTDGKCI) is cleaved from the precursor. Leucine 80 bears the Leucine amide mark. A propeptide spanning residues 86 to 117 (ADRKPEINSDIEAFANAFEEPHWAIVTIPETE) is cleaved from the precursor. The residue at position 120 (glutamine 120) is a Pyrrolidone carboxylic acid. Leucine 128 carries the leucine amide modification. Positions 131-153 (ESGEDYFSYGFPKDQEELYTEEQ) are excised as a propeptide. Residues leucine 163 and leucine 175 each carry the leucine amide modification. Residues 178–195 (QLHNIVDKPRQNFNDPRF) constitute a propeptide that is removed on maturation.

The protein belongs to the pyrokinin family.

It is found in the secreted. In terms of biological role, a hormone that controls sex pheromone production in females and pheromone responsiveness in male. Also mediates visceral muscle contractile activity (myotropic activity). The protein is PBAN-type neuropeptides of Apis mellifera (Honeybee).